The chain runs to 1297 residues: Outer capsid protein VP1 (1297 aa).

This sequence belongs to the aquareoviridae outer capsid VP1 protein family.

The protein resides in the virion. It catalyses the reaction a 5'-end diphospho-ribonucleoside in mRNA + GTP + H(+) = a 5'-end (5'-triphosphoguanosine)-ribonucleoside in mRNA + diphosphate. The enzyme catalyses a 5'-end (5'-triphosphoguanosine)-ribonucleoside in mRNA + S-adenosyl-L-methionine = a 5'-end (N(7)-methyl 5'-triphosphoguanosine)-ribonucleoside in mRNA + S-adenosyl-L-homocysteine. Outer capsid protein involved in mRNA capping. Catalyzes the last 3 enzymatic activities for formation of the 5' cap structure on the viral plus-strand transcripts, namely the RNA guanylyltransferase, RNA-7N- and RNA-2'O-methyltransferase activities. In Oncorhynchus keta (Chum salmon), this protein is Outer capsid protein VP1 (S1).